A 279-amino-acid chain; its full sequence is Small ribosomal subunit protein uS3 (279 aa).

One can recognise a KH type-2 domain in the interval 17 to 86 (VDEYFLEKLE…NPQIDVQEVK (70 aa)). Composition is skewed to low complexity over residues 206 to 233 (AEKK…STAA) and 241 to 252 (ESEAAEAVTPEG). The disordered stretch occupies residues 206-279 (AEKKSPAAGA…VVKTDGDSQS (74 aa)).

This sequence belongs to the universal ribosomal protein uS3 family. In terms of assembly, part of the 30S ribosomal subunit.

In terms of biological role, binds the lower part of the 30S subunit head. The sequence is that of Small ribosomal subunit protein uS3 from Methanocella arvoryzae (strain DSM 22066 / NBRC 105507 / MRE50).